Reading from the N-terminus, the 467-residue chain is Plasma alpha-L-fucosidase (467 aa).

The signal sequence occupies residues 1-28 (MRPQELPRLAFPLLLLLLLLLPPPPCPA). N-linked (GlcNAc...) asparagine glycans are attached at residues Asn171 and Asn239. Ser301 is subject to Phosphoserine; by FAM20C. The N-linked (GlcNAc...) asparagine glycan is linked to Asn377.

This sequence belongs to the glycosyl hydrolase 29 family. Homotetramer.

It is found in the secreted. It carries out the reaction an alpha-L-fucoside + H2O = L-fucose + an alcohol. In terms of biological role, alpha-L-fucosidase is responsible for hydrolyzing the alpha-1,6-linked fucose joined to the reducing-end N-acetylglucosamine of the carbohydrate moieties of glycoproteins. This Homo sapiens (Human) protein is Plasma alpha-L-fucosidase (FUCA2).